The chain runs to 257 residues: MNPLIIKLGGVLLDSEEALERLFTALVNYREAHQRPLIIVHGGGCVVDELMKQLNLPVKKKNGLRVTPADQIDIITGALAGTANKTLLAWAKKHGISSVGLFLGDGDSVKVTQLDAELGHVGLAQPGSPALINTLLAGGYLPVVSSIGVTDEGQLMNVNADQAATALAATLGADLILLSDVSGILDGKGQRIAEMTAEKAEQLIEQGIITDGMIVKVNAALDAARALGRPVDIASWRHAEQLPALFNGTPIGTRILA.

Substrate is bound by residues 43–44, Arg65, and Asn157; that span reads GG. ATP is bound by residues 180 to 185 and 208 to 210; these read DVSGIL and IIT.

It belongs to the acetylglutamate kinase family. ArgB subfamily. Homodimer.

It is found in the cytoplasm. It carries out the reaction N-acetyl-L-glutamate + ATP = N-acetyl-L-glutamyl 5-phosphate + ADP. It functions in the pathway amino-acid biosynthesis; L-arginine biosynthesis; N(2)-acetyl-L-ornithine from L-glutamate: step 2/4. Functionally, catalyzes the ATP-dependent phosphorylation of N-acetyl-L-glutamate. This Klebsiella pneumoniae (strain 342) protein is Acetylglutamate kinase.